A 379-amino-acid chain; its full sequence is Heme chaperone HemW (379 aa).

Positions 1-233 constitute a Radical SAM core domain; sequence MKSAYIHIPF…MSKMEAHGIH (233 aa). Residue Tyr-5 participates in S-adenosyl-L-methionine binding. The [4Fe-4S] cluster site is built by Cys-11, Cys-15, and Cys-18. S-adenosyl-L-methionine is bound by residues Gly-60, 61 to 62, Glu-94, Gln-121, Arg-133, and Asp-158; that span reads GT.

It belongs to the anaerobic coproporphyrinogen-III oxidase family. HemW subfamily. The cofactor is [4Fe-4S] cluster.

Its subcellular location is the cytoplasm. Functionally, probably acts as a heme chaperone, transferring heme to an unknown acceptor. Binds one molecule of heme per monomer, possibly covalently. Binds 1 [4Fe-4S] cluster. The cluster is coordinated with 3 cysteines and an exchangeable S-adenosyl-L-methionine. This chain is Heme chaperone HemW, found in Bacillus subtilis (strain 168).